The following is a 456-amino-acid chain: Phosphomannomutase (456 aa).

Ser-98 serves as the catalytic Phosphoserine intermediate. Mg(2+) is bound by residues Ser-98, Asp-245, Asp-247, and Asp-249.

This sequence belongs to the phosphohexose mutase family. Mg(2+) serves as cofactor.

It carries out the reaction alpha-D-mannose 1-phosphate = D-mannose 6-phosphate. The protein operates within nucleotide-sugar biosynthesis; GDP-alpha-D-mannose biosynthesis; alpha-D-mannose 1-phosphate from D-fructose 6-phosphate: step 2/2. In terms of biological role, involved in the biosynthesis of the capsular polysaccharide colanic acid. The sequence is that of Phosphomannomutase (manB) from Escherichia coli (strain K12).